The sequence spans 780 residues: Cullin-1 (780 aa).

Positions 710–771 (DRKSVISACI…EKEYMLRTEG (62 aa)) constitute a Cullin neddylation domain. Lys724 is covalently cross-linked (Glycyl lysine isopeptide (Lys-Gly) (interchain with G-Cter in NEDD8)).

This sequence belongs to the cullin family. As to quaternary structure, component of an SCF (SKP1-CUL1-F-box protein) E3 ubiquitin ligase complex composed of cul-1, fsn-1, rpm-1 and skr-1. Interacts with Skp1-related proteins skr-1, skr-2, skr-3, skr-4, skr-7, skr-8, skr-9 and skr-10. In terms of processing, neddylated; which enhances the ubiquitination activity of SCF. In terms of tissue distribution, ubiquitous.

Its subcellular location is the cytoplasm. It participates in protein modification; protein ubiquitination. Its function is as follows. Probable core component of multiple cullin-RING-based SCF (SKP1-CUL1-F-box) E3 ubiquitin-protein ligase complexes which mediate the ubiquitination and subsequent proteasomal degradation of target proteins. As a scaffold protein may contribute to catalysis through positioning of the substrate and the ubiquitin-conjugating enzyme. Required for developmentally programmed transitions from the G1 phase of the cell cycle to the G0 phase or the apoptotic pathway. The protein is Cullin-1 (cul-1) of Caenorhabditis elegans.